We begin with the raw amino-acid sequence, 229 residues long: MEHSFKTITAGVVFVVLLLQQAPVLIRATDADPLQDFCVADLDSKVTVNGHACKPASAAGDEFLFSSKIATGGDVNANPNGSNVTELDVAEWPGVNTLGVSMNRVDFAPGGTNPPHVHPRATEVGIVLRGELLVGIIGTLDMGNRYYSKVVRAGETFVIPRGLMHFQFNVGKTEATMVVSFNSQNPGIVFVPLTLFGSNPPIPTPVLVKALRVDTGVVELLKSKFTGGY.

A signal peptide spans 1–31; it reads MEHSFKTITAGVVFVVLLLQQAPVLIRATDA. Residues C38 and C53 are joined by a disulfide bond. Residues 67–219 enclose the Cupin type-1 domain; the sequence is SKIATGGDVN…ALRVDTGVVE (153 aa). N-linked (GlcNAc...) asparagine glycans are attached at residues N80 and N83. Positions 116, 118, 123, and 165 each coordinate Mn(2+).

It belongs to the germin family. Oligomer (believed to be a pentamer but probably hexamer).

Its subcellular location is the secreted. It localises to the extracellular space. The protein resides in the apoplast. In terms of biological role, may play a role in plant defense. Probably has no oxalate oxidase activity even if the active site is conserved. This Oryza sativa subsp. japonica (Rice) protein is Putative germin-like protein 3-4.